A 435-amino-acid chain; its full sequence is Gap junction alpha-3 protein (435 aa).

Residues 2 to 15 (GDWSFLGRLLENAQ) lie within the membrane without spanning it. At 16–19 (EHST) the chain is on the cytoplasmic side. Residues 20–40 (VIGKVWLTVLFIFRILVLGAA) traverse the membrane as a helical segment. At 41–71 (AEDVWGDEQSDFTCNTQQPGCENVCYDRAFP) the chain is on the extracellular side. 3 cysteine pairs are disulfide-bonded: Cys-54–Cys-192, Cys-61–Cys-186, and Cys-65–Cys-181. The chain crosses the membrane as a helical span at residues 72-92 (ISHIRFWALQIIFVSTPTLIY). The Cytoplasmic segment spans residues 93 to 152 (LGHVLHIVRMEEKKKEREEEEQLKRESPSPKEPPQDNPSSRDDRGRVRMAGALLRTYVFN). Residues 108–121 (EREEEEQLKRESPS) are compositionally biased toward basic and acidic residues. The interval 108 to 136 (EREEEEQLKRESPSPKEPPQDNPSSRDDR) is disordered. A helical transmembrane segment spans residues 153–173 (IIFKTLFEVGFIAGQYFLYGF). Over 174–201 (ELKPLYRCDRWPCPNTVDCFISRPTEKT) the chain is Extracellular. Residues 202–222 (IFIIFMLAVACASLLLNMLEI) traverse the membrane as a helical segment. Topologically, residues 223 to 435 (YHLGWKKLKQ…GRARPEDLAI (213 aa)) are cytoplasmic. The disordered stretch occupies residues 332-435 (AAERQPPALK…GRARPEDLAI (104 aa)). Composition is skewed to low complexity over residues 342 to 389 (AYPA…ALAG) and 415 to 427 (GRAS…SSGR).

The protein belongs to the connexin family. Alpha-type (group II) subfamily. As to quaternary structure, a hemichannel or connexon is composed of a hexamer of connexins. A functional gap junction is formed by the apposition of two hemichannels. Forms heteromeric channels with GJA8.

The protein resides in the cell membrane. Its subcellular location is the cell junction. It is found in the gap junction. In terms of biological role, structural component of lens fiber gap junctions. Gap junctions are dodecameric channels that connect the cytoplasm of adjoining cells. They are formed by the docking of two hexameric hemichannels, one from each cell membrane. Small molecules and ions diffuse from one cell to a neighboring cell via the central pore. In Homo sapiens (Human), this protein is Gap junction alpha-3 protein (GJA3).